The sequence spans 410 residues: Chorismate synthase (410 aa).

The NADP(+) site is built by R43 and R49. FMN contacts are provided by residues R143–S145, Q264–A265, G308, K323–T327, and R349.

The protein belongs to the chorismate synthase family. Homotetramer. It depends on FMNH2 as a cofactor.

The catalysed reaction is 5-O-(1-carboxyvinyl)-3-phosphoshikimate = chorismate + phosphate. It functions in the pathway metabolic intermediate biosynthesis; chorismate biosynthesis; chorismate from D-erythrose 4-phosphate and phosphoenolpyruvate: step 7/7. Its function is as follows. Catalyzes the anti-1,4-elimination of the C-3 phosphate and the C-6 proR hydrogen from 5-enolpyruvylshikimate-3-phosphate (EPSP) to yield chorismate, which is the branch point compound that serves as the starting substrate for the three terminal pathways of aromatic amino acid biosynthesis. This reaction introduces a second double bond into the aromatic ring system. The protein is Chorismate synthase of Corynebacterium glutamicum (strain ATCC 13032 / DSM 20300 / JCM 1318 / BCRC 11384 / CCUG 27702 / LMG 3730 / NBRC 12168 / NCIMB 10025 / NRRL B-2784 / 534).